We begin with the raw amino-acid sequence, 198 residues long: dTTP/UTP pyrophosphatase (198 aa).

The active-site Proton acceptor is Asp-69.

The protein belongs to the Maf family. YhdE subfamily. Requires a divalent metal cation as cofactor.

The protein localises to the cytoplasm. The catalysed reaction is dTTP + H2O = dTMP + diphosphate + H(+). It carries out the reaction UTP + H2O = UMP + diphosphate + H(+). Nucleoside triphosphate pyrophosphatase that hydrolyzes dTTP and UTP. May have a dual role in cell division arrest and in preventing the incorporation of modified nucleotides into cellular nucleic acids. The polypeptide is dTTP/UTP pyrophosphatase (Idiomarina loihiensis (strain ATCC BAA-735 / DSM 15497 / L2-TR)).